The chain runs to 338 residues: 1-aminocyclopropane-1-carboxylate deaminase (338 aa).

N6-(pyridoxal phosphate)lysine is present on K51. The active-site Nucleophile is S78.

Belongs to the ACC deaminase/D-cysteine desulfhydrase family. As to quaternary structure, homotrimer. Requires pyridoxal 5'-phosphate as cofactor.

It catalyses the reaction 1-aminocyclopropane-1-carboxylate + H2O = 2-oxobutanoate + NH4(+). Catalyzes a cyclopropane ring-opening reaction, the irreversible conversion of 1-aminocyclopropane-1-carboxylate (ACC) to ammonia and alpha-ketobutyrate. Allows growth on ACC as a nitrogen source. In Pseudomonas syringae pv. tomato (strain ATCC BAA-871 / DC3000), this protein is 1-aminocyclopropane-1-carboxylate deaminase.